The primary structure comprises 101 residues: Small ribosomal subunit protein uS14 (101 aa).

The protein belongs to the universal ribosomal protein uS14 family. In terms of assembly, part of the 30S ribosomal subunit. Contacts proteins S3 and S10.

Binds 16S rRNA, required for the assembly of 30S particles and may also be responsible for determining the conformation of the 16S rRNA at the A site. This is Small ribosomal subunit protein uS14 from Paenarthrobacter aurescens (strain TC1).